An 88-amino-acid polypeptide reads, in one-letter code: Small ribosomal subunit protein uS17 (88 aa).

The protein belongs to the universal ribosomal protein uS17 family. Part of the 30S ribosomal subunit.

In terms of biological role, one of the primary rRNA binding proteins, it binds specifically to the 5'-end of 16S ribosomal RNA. This Maridesulfovibrio salexigens (strain ATCC 14822 / DSM 2638 / NCIMB 8403 / VKM B-1763) (Desulfovibrio salexigens) protein is Small ribosomal subunit protein uS17.